The chain runs to 1368 residues: DNA-directed RNA polymerase subunit beta (1368 aa).

Belongs to the RNA polymerase beta chain family. In terms of assembly, the RNAP catalytic core consists of 2 alpha, 1 beta, 1 beta' and 1 omega subunit. When a sigma factor is associated with the core the holoenzyme is formed, which can initiate transcription.

It catalyses the reaction RNA(n) + a ribonucleoside 5'-triphosphate = RNA(n+1) + diphosphate. DNA-dependent RNA polymerase catalyzes the transcription of DNA into RNA using the four ribonucleoside triphosphates as substrates. The chain is DNA-directed RNA polymerase subunit beta from Burkholderia multivorans (strain ATCC 17616 / 249).